The primary structure comprises 69 residues: UPF0291 protein CD630_10710 (69 aa).

It belongs to the UPF0291 family.

It is found in the cytoplasm. This Clostridioides difficile (strain 630) (Peptoclostridium difficile) protein is UPF0291 protein CD630_10710.